The primary structure comprises 383 residues: Lipid-A-disaccharide synthase (383 aa).

It belongs to the LpxB family.

The enzyme catalyses a lipid X + a UDP-2-N,3-O-bis[(3R)-3-hydroxyacyl]-alpha-D-glucosamine = a lipid A disaccharide + UDP + H(+). It functions in the pathway bacterial outer membrane biogenesis; LPS lipid A biosynthesis. Condensation of UDP-2,3-diacylglucosamine and 2,3-diacylglucosamine-1-phosphate to form lipid A disaccharide, a precursor of lipid A, a phosphorylated glycolipid that anchors the lipopolysaccharide to the outer membrane of the cell. This is Lipid-A-disaccharide synthase from Syntrophus aciditrophicus (strain SB).